Consider the following 982-residue polypeptide: Coatomer subunit beta (982 aa).

HEAT repeat units follow at residues 16 to 53 (SGAPVNSKELKSALEKGDMKARASALEALIRMHLNGEP), 130 to 167 (ELVEPLVSSVVQNLTHRVTYVRRNAVLAVHRIFKRFPE), 241 to 278 (YDKGRYVTVLFSILQSNNPAVRYQCASTLLSISTSPTA), and 317 to 352 (LQDSLLDILSVLANGTMEIRKRIVTLGVELVSNQNS).

In terms of assembly, oligomeric complex that consists of at least the alpha, beta, beta', gamma, delta, epsilon and zeta subunits.

Its subcellular location is the cytoplasm. It is found in the golgi apparatus membrane. The protein localises to the cytoplasmic vesicle. It localises to the COPI-coated vesicle membrane. In terms of biological role, the coatomer is a cytosolic protein complex that binds to dilysine motifs and reversibly associates with Golgi non-clathrin-coated vesicles, which further mediate biosynthetic protein transport from the ER, via the Golgi up to the trans Golgi network. Coatomer complex is required for budding from Golgi membranes, and is essential for the retrograde Golgi-to-ER transport of dilysine-tagged proteins. This Trypanosoma brucei brucei protein is Coatomer subunit beta.